The following is a 160-amino-acid chain: uncharacterized protein (160 aa).

Over residues 1–31 the composition is skewed to basic and acidic residues; that stretch reads METEKPNTDVKVAQDLEKLKLDEKHKDEKKD. A disordered region spans residues 1–160; the sequence is METEKPNTDV…DKKDKEHKKE (160 aa). Positions 20–111 form a coiled coil; it reads KLDEKHKDEK…KSKLEGKKDK (92 aa). Positions 32–42 are enriched in basic residues; that stretch reads KKDKKDKKDKK. The segment covering 43–160 has biased composition (basic and acidic residues); the sequence is DKKEKTPEEI…DKKDKEHKKE (118 aa).

This is an uncharacterized protein from Dictyostelium discoideum (Social amoeba).